Consider the following 88-residue polypeptide: Small ribosomal subunit protein bS20 (88 aa).

This sequence belongs to the bacterial ribosomal protein bS20 family.

In terms of biological role, binds directly to 16S ribosomal RNA. The sequence is that of Small ribosomal subunit protein bS20 from Clostridioides difficile (strain 630) (Peptoclostridium difficile).